The chain runs to 930 residues: RNA-binding protein 10 (930 aa).

Basic and acidic residues-rich tracts occupy residues 1-14 (MEYERRGGRGDRTG) and 21-45 (RSQDDSGENRSRDHDYRDMDYRSYP). The interval 1–127 (MEYERRGGRG…EDEEEEEEKA (127 aa)) is disordered. The segment covering 59–70 (DSSEEQSAEDSY) has biased composition (acidic residues). Phosphoserine is present on residues serine 61 and serine 89. The segment covering 80-89 (RRRRRRHRHS) has biased composition (basic residues). Residues 98–111 (RDGDYRDQDYRTEQ) are compositionally biased toward basic and acidic residues. Positions 112–125 (GEEEEEEDEEEEEE) are enriched in acidic residues. Positions 129 to 209 (NIVMLRMLPQ…QKVSMHYSDP (81 aa)) constitute an RRM 1 domain. The RanBP2-type zinc-finger motif lies at 212–242 (KINEDWLCNKCGVQNFKRREKCFKCGVPKSE). The RRM 2 domain occupies 300 to 384 (DTIILRNLNP…KTINVEFAKG (85 aa)). Position 383 is an N6-acetyllysine (lysine 383). Disordered regions lie at residues 464-487 (GPGMTGTKGDPAGTGPEASLEAGA), 503-522 (APGLYQQSAEGSSGQSTATN), 537-566 (ELQSPTQPSSSAFPPATSPTAPEAYSQYPV), 620-646 (EQSADGHKDTGASSKEGKEKKEKHKTK), and 712-753 (DLPK…EEKL). A compositionally biased stretch (polar residues) spans 507 to 522 (YQQSAEGSSGQSTATN). The span at 540–562 (SPTQPSSSAFPPATSPTAPEAYS) shows a compositional bias: low complexity. A compositionally biased stretch (basic and acidic residues) spans 623-639 (ADGHKDTGASSKEGKEK). 5 positions are modified to phosphoserine: serine 718, serine 723, serine 733, serine 736, and serine 738. The segment covering 743–753 (ERGGPEREEKL) has biased composition (basic and acidic residues). A C2H2-type; atypical zinc finger spans residues 759–784 (LACLLCRRQFPSKEALIRHQQLSGLH). Residues serine 781, serine 797, and serine 845 each carry the phosphoserine modification. Positions 818 to 861 (AAERREKYGIPEPPEPKRRKYGGISTASVDFEQPTRDGLGSDNI) are disordered. Residues 858–904 (SDNIGSRMLQAMGWKEGSGLGRKKQGIVTPIEAQTRVRGSGLGARGS) form the G-patch domain. Residue arginine 902 is modified to Omega-N-methylarginine.

In terms of assembly, associates with the spliceosome. Component of a large chromatin remodeling complex, at least composed of MYSM1, PCAF, RBM10 and KIF11/TRIP5.

The protein localises to the nucleus. Functionally, binds to ssRNA containing the consensus sequence 5'-AGGUAA-3'. May be involved in post-transcriptional processing, most probably in mRNA splicing. Binds to RNA homopolymers, with a preference for poly(G) and poly(U) and little for poly(A). May bind to specific miRNA hairpins. In Mus musculus (Mouse), this protein is RNA-binding protein 10.